We begin with the raw amino-acid sequence, 165 residues long: Neurotrophin-3 (165 aa).

An N-terminal signal peptide occupies residues 1-3 (IQS). The propeptide occupies 4 to 119 (TSMDQGSLSE…VLNRTSRRKR (116 aa)). Residue Asn-112 is glycosylated (N-linked (GlcNAc...) asparagine).

This sequence belongs to the NGF-beta family.

The protein localises to the secreted. Functionally, seems to promote the survival of visceral and proprioceptive sensory neurons. The sequence is that of Neurotrophin-3 (NTF3) from Anilius scytale (Coral cylinder snake).